We begin with the raw amino-acid sequence, 181 residues long: MGNIFANLFKGLFGKKEMRILMVGLDAAGKTTILYKLKLGEIVTTIPTIGFNVETVEYKNISFTVWDVGGQDKIRPLWRHYFQNTQGLIFVVDSNDRERVNEAREELMRMLAEDELRDAVLLVFANKQDLPNAMNAAEITDKLGLHSLRHRNWYIQATCATSGDGLYEGLDWLSNQLRNQK.

Gly2 is subject to N-acetylglycine; alternate. Gly2 is lipidated: N-myristoyl glycine; alternate. The important for the stable binding to the membranes stretch occupies residues 3–16 (NIFANLFKGLFGKK). Residues 24 to 32 (GLDAAGKTT), 126 to 129 (NKQD), and Ala160 each bind GTP.

The protein belongs to the small GTPase superfamily. Arf family. In terms of assembly, interacts (when activated) with GGA1, GGA2 and GGA3; the interaction is required for proper subcellular location of GGA1, GGA2 and GGA3. Interacts with ARHGAP21, ASAP2, GGA1, HERC1, PRKCABP, PIP5K1B, TMED2, PSCD2, TMED10 and GRIA2. Interacts with ARFGAP1, which hydrolyzes GTP and thus, regulates its function. Interacts with PI4KB in the Golgi complex. Interacts with NCS1/FREQ in the Golgi and at the plasma membrane. Interacts with PLEKHA3. Interacts with PLEKHA8; the interaction, together with phosphatidylinositol 4-phosphate binding, is required for FAPP2-mediated glucosylceramide transfer activity. Interacts (activated) with PICK1 (via PDZ domain); the interaction blocks Arp2/3 complex inhibition. Interacts with IQSEC1. Interacts with C9orf72.

The protein resides in the golgi apparatus membrane. The protein localises to the synapse. Its subcellular location is the synaptosome. It is found in the postsynaptic density. The catalysed reaction is GTP + H2O = GDP + phosphate + H(+). Alternates between an inactive GDP-bound form and an active GTP-bound form. Activated by guanine nucleotide-exchange factors (GEFs) and inactivated by GTPase-activating proteins (GAPs). Functionally, small GTPase involved in protein trafficking between different compartments. Modulates vesicle budding and uncoating within the Golgi complex. In its GTP-bound form, triggers the recruitment of coatomer proteins to the Golgi membrane. The hydrolysis of ARF1-bound GTP, which is mediated by ARFGAPs proteins, is required for dissociation of coat proteins from Golgi membranes and vesicles. The GTP-bound form interacts with PICK1 to limit PICK1-mediated inhibition of Arp2/3 complex activity; the function is linked to AMPA receptor (AMPAR) trafficking, regulation of synaptic plasticity of excitatory synapses and spine shrinkage during long-term depression (LTD). Plays a key role in the regulation of intestinal stem cells and gut microbiota, and is essential for maintaining intestinal homeostasis. Also plays a critical role in mast cell expansion but not in mast cell maturation by facilitating optimal mTORC1 activation. This chain is ADP-ribosylation factor 1 (ARF1), found in Bos taurus (Bovine).